Here is a 266-residue protein sequence, read N- to C-terminus: Undecaprenyl-diphosphatase (266 aa).

Helical transmembrane passes span L4 to S24, G41 to Y61, A79 to V99, L108 to I128, M143 to V163, A184 to W204, I220 to V240, and F243 to L263.

This sequence belongs to the UppP family.

It localises to the cell inner membrane. The enzyme catalyses di-trans,octa-cis-undecaprenyl diphosphate + H2O = di-trans,octa-cis-undecaprenyl phosphate + phosphate + H(+). Its function is as follows. Catalyzes the dephosphorylation of undecaprenyl diphosphate (UPP). Confers resistance to bacitracin. This Sphingopyxis alaskensis (strain DSM 13593 / LMG 18877 / RB2256) (Sphingomonas alaskensis) protein is Undecaprenyl-diphosphatase.